The chain runs to 376 residues: Na(+)/H(+) antiporter NhaA (376 aa).

The next 11 membrane-spanning stretches (helical) occupy residues 8–28 (FLAT…AAML), 49–69 (LSLL…LVGL), 87–107 (ILPC…YLAF), 117–137 (GWAI…ALLG), 140–160 (APAS…MGAV), 162–182 (IIAL…AIVI), 209–229 (LAVL…ALAI), 248–268 (PWVA…VSFA), 270–290 (IGAE…LFLG), 321–341 (GVAL…GLAF), and 349–369 (EVKI…YALL).

It belongs to the NhaA Na(+)/H(+) (TC 2.A.33) antiporter family.

It localises to the cell inner membrane. The enzyme catalyses Na(+)(in) + 2 H(+)(out) = Na(+)(out) + 2 H(+)(in). Na(+)/H(+) antiporter that extrudes sodium in exchange for external protons. This Rhizorhabdus wittichii (strain DSM 6014 / CCUG 31198 / JCM 15750 / NBRC 105917 / EY 4224 / RW1) (Sphingomonas wittichii) protein is Na(+)/H(+) antiporter NhaA.